Reading from the N-terminus, the 382-residue chain is D-galactonate dehydratase (382 aa).

Asp183 is a Mg(2+) binding site. Residue His185 is the Proton donor of the active site. Mg(2+) contacts are provided by Glu209 and Glu235. His285 (proton acceptor) is an active-site residue.

It belongs to the mandelate racemase/muconate lactonizing enzyme family. GalD subfamily. Requires Mg(2+) as cofactor.

The enzyme catalyses D-galactonate = 2-dehydro-3-deoxy-D-galactonate + H2O. Its pathway is carbohydrate acid metabolism; D-galactonate degradation; D-glyceraldehyde 3-phosphate and pyruvate from D-galactonate: step 1/3. Catalyzes the dehydration of D-galactonate to 2-keto-3-deoxy-D-galactonate. The protein is D-galactonate dehydratase of Ralstonia nicotianae (strain ATCC BAA-1114 / GMI1000) (Ralstonia solanacearum).